Reading from the N-terminus, the 715-residue chain is Lactococcin transport/processing ATP-binding protein LcnC-like (715 aa).

The 128-residue stretch at 11-138 folds into the Peptidase C39 domain; sequence QVDEMDCGCA…SEWTGISLFL (128 aa). Cys-17 is a catalytic residue. The next 5 helical transmembrane spans lie at 167 to 187, 197 to 217, 237 to 257, 282 to 302, and 307 to 327; these read VILN…LGSY, IPNA…LTYI, LAID…MSFF, TILS…ILGL, and LFLL…IFTP. In terms of domain architecture, ABC transmembrane type-1 spans 168–450; the sequence is ILNIVIASFI…IINLQTKLQK (283 aa). An ABC transporter domain is found at 482–715; it reads LNMSEISYQY…NGFYAQLYHN (234 aa). 515–522 is a binding site for ATP; that stretch reads GISGSGKS.

This sequence belongs to the ABC transporter superfamily. HlyB family.

It localises to the cell membrane. In terms of biological role, involved in the export process of a bacteriocin lactococcin. This chain is Lactococcin transport/processing ATP-binding protein LcnC-like (lcnC), found in Lactococcus lactis subsp. lactis (strain IL1403) (Streptococcus lactis).